The following is a 443-amino-acid chain: MPYIPHTPEELQEMLSVVGVRDLDGLFADIPPEMRPKQFNLPKGQSEAAVCAYFEGLAAKNCPDLVSFLGAGYYAHDIPKAVDALAGRSEFYTSYTPYQPECSQGTLQAIFEFQTAISRLLGMDCANASVYDGGTAIFEAAMMAVRSTRRRVLVVDEAVNPIWRVMLASYISSLDLELKTVQQEKGVSRLDALMAAIDDTTAAVIVQNPNFFGAVADYTQVFAKARAHKAFGVISVYPVMQSVLKTPGEMGADVAVAEGQSIGMPLSFGGPYLGLMTCRKEHIRQFPGRIVGRTTDVDGKTGYVLTLQAREQHIRRAKATSNICSNQALCALRALIHLSLLGPCGLTRLAENNMALTRYAVERLTSIKGIELLNDAPYGNEVALRLPMPAQMLVDALSAHGCVPGYPLGRYYPGMEDVLLLACTERNSRQQIGMLAETVGGLL.

It belongs to the GcvP family. N-terminal subunit subfamily. As to quaternary structure, the glycine cleavage system is composed of four proteins: P, T, L and H. In this organism, the P 'protein' is a heterodimer of two subunits.

The catalysed reaction is N(6)-[(R)-lipoyl]-L-lysyl-[glycine-cleavage complex H protein] + glycine + H(+) = N(6)-[(R)-S(8)-aminomethyldihydrolipoyl]-L-lysyl-[glycine-cleavage complex H protein] + CO2. The glycine cleavage system catalyzes the degradation of glycine. The P protein binds the alpha-amino group of glycine through its pyridoxal phosphate cofactor; CO(2) is released and the remaining methylamine moiety is then transferred to the lipoamide cofactor of the H protein. This Desulfovibrio desulfuricans (strain ATCC 27774 / DSM 6949 / MB) protein is Probable glycine dehydrogenase (decarboxylating) subunit 1.